The primary structure comprises 545 residues: CTP synthase (545 aa).

Residues 1 to 266 (MATNYIFVTG…DTFVCDRFRL (266 aa)) form an amidoligase domain region. Ser-14 lines the CTP pocket. Position 14 (Ser-14) interacts with UTP. Residues 15 to 20 (SLGKGI) and Asp-72 each bind ATP. Residues Asp-72 and Glu-140 each coordinate Mg(2+). CTP-binding positions include 147–149 (DIE), 187–192 (KTKPTQ), and Lys-223. UTP-binding positions include 187 to 192 (KTKPTQ) and Lys-223. 239–241 (KDV) provides a ligand contact to ATP. The 252-residue stretch at 291–542 (TIGMVGKYVE…VKAAKDYQDS (252 aa)) folds into the Glutamine amidotransferase type-1 domain. Position 352 (Gly-352) interacts with L-glutamine. The active-site Nucleophile; for glutamine hydrolysis is Cys-379. Residues 380-383 (LGMQ), Glu-403, and Arg-470 contribute to the L-glutamine site. Active-site residues include His-515 and Glu-517.

It belongs to the CTP synthase family. In terms of assembly, homotetramer.

It carries out the reaction UTP + L-glutamine + ATP + H2O = CTP + L-glutamate + ADP + phosphate + 2 H(+). The catalysed reaction is L-glutamine + H2O = L-glutamate + NH4(+). The enzyme catalyses UTP + NH4(+) + ATP = CTP + ADP + phosphate + 2 H(+). The protein operates within pyrimidine metabolism; CTP biosynthesis via de novo pathway; CTP from UDP: step 2/2. Its activity is regulated as follows. Allosterically activated by GTP, when glutamine is the substrate; GTP has no effect on the reaction when ammonia is the substrate. The allosteric effector GTP functions by stabilizing the protein conformation that binds the tetrahedral intermediate(s) formed during glutamine hydrolysis. Inhibited by the product CTP, via allosteric rather than competitive inhibition. Catalyzes the ATP-dependent amination of UTP to CTP with either L-glutamine or ammonia as the source of nitrogen. Regulates intracellular CTP levels through interactions with the four ribonucleotide triphosphates. This Actinobacillus pleuropneumoniae serotype 7 (strain AP76) protein is CTP synthase.